Here is a 192-residue protein sequence, read N- to C-terminus: Flavin prenyltransferase UbiX (192 aa).

FMN-binding positions include 10 to 12 (GAS), Ser36, 92 to 95 (SVAT), and Arg127. The dimethylallyl phosphate site is built by Tyr157 and Lys173.

Belongs to the UbiX/PAD1 family.

The catalysed reaction is dimethylallyl phosphate + FMNH2 = prenylated FMNH2 + phosphate. In terms of biological role, flavin prenyltransferase that catalyzes the synthesis of the prenylated FMN cofactor (prenyl-FMN) for 4-hydroxy-3-polyprenylbenzoic acid decarboxylase UbiD. The prenyltransferase is metal-independent and links a dimethylallyl moiety from dimethylallyl monophosphate (DMAP) to the flavin N5 and C6 atoms of FMN. The chain is Flavin prenyltransferase UbiX from Chlamydia trachomatis serovar D (strain ATCC VR-885 / DSM 19411 / UW-3/Cx).